Consider the following 564-residue polypeptide: Proline--tRNA ligase (564 aa).

This sequence belongs to the class-II aminoacyl-tRNA synthetase family. ProS type 1 subfamily. In terms of assembly, homodimer.

Its subcellular location is the cytoplasm. The enzyme catalyses tRNA(Pro) + L-proline + ATP = L-prolyl-tRNA(Pro) + AMP + diphosphate. Catalyzes the attachment of proline to tRNA(Pro) in a two-step reaction: proline is first activated by ATP to form Pro-AMP and then transferred to the acceptor end of tRNA(Pro). As ProRS can inadvertently accommodate and process non-cognate amino acids such as alanine and cysteine, to avoid such errors it has two additional distinct editing activities against alanine. One activity is designated as 'pretransfer' editing and involves the tRNA(Pro)-independent hydrolysis of activated Ala-AMP. The other activity is designated 'posttransfer' editing and involves deacylation of mischarged Ala-tRNA(Pro). The misacylated Cys-tRNA(Pro) is not edited by ProRS. This Thermosipho melanesiensis (strain DSM 12029 / CIP 104789 / BI429) protein is Proline--tRNA ligase.